Consider the following 309-residue polypeptide: Ferredoxin--NADP reductase (309 aa).

FAD is bound by residues aspartate 25, glutamine 33, tyrosine 38, valine 77, phenylalanine 107, aspartate 267, and threonine 307.

It belongs to the ferredoxin--NADP reductase type 2 family. Homodimer. It depends on FAD as a cofactor.

It carries out the reaction 2 reduced [2Fe-2S]-[ferredoxin] + NADP(+) + H(+) = 2 oxidized [2Fe-2S]-[ferredoxin] + NADPH. This is Ferredoxin--NADP reductase from Lactobacillus acidophilus (strain ATCC 700396 / NCK56 / N2 / NCFM).